The sequence spans 288 residues: 2-hydroxy-6-oxononadienedioate/2-hydroxy-6-oxononatrienedioate hydrolase (288 aa).

The Proton acceptor role is filled by His267.

It belongs to the AB hydrolase superfamily. MhpC family. In terms of assembly, homodimer.

It catalyses the reaction (2Z,4E)-2-hydroxy-6-oxonona-2,4-dienedioate + H2O = (2Z)-2-hydroxypenta-2,4-dienoate + succinate + H(+). The enzyme catalyses (2Z,4E,7E)-2-hydroxy-6-oxonona-2,4,7-trienedioate + H2O = (2Z)-2-hydroxypenta-2,4-dienoate + fumarate + H(+). Its pathway is aromatic compound metabolism; 3-phenylpropanoate degradation. In terms of biological role, catalyzes the cleavage of the C5-C6 bond of 2-hydroxy-6-oxononadienedioate and 2-hydroxy-6-oxononatrienedioate, a dienol ring fission product of the bacterial meta-cleavage pathway for degradation of phenylpropionic acid. The protein is 2-hydroxy-6-oxononadienedioate/2-hydroxy-6-oxononatrienedioate hydrolase of Escherichia coli O81 (strain ED1a).